We begin with the raw amino-acid sequence, 164 residues long: uncharacterized protein (164 aa).

A disordered region spans residues 144–164 (GFISPEKEHESEDMTSQSLVA).

This is an uncharacterized protein from Synechocystis sp. (strain ATCC 27184 / PCC 6803 / Kazusa).